A 115-amino-acid polypeptide reads, in one-letter code: U3-lycotoxin-Ls1a (115 aa).

A signal peptide spans 1–20; it reads MKFVLLFGVFLVTLFSYSSA. A propeptide spanning residues 21 to 44 is cleaved from the precursor; it reads EMLDDFGQADEDELLSLIEKEEAR. Cystine bridges form between cysteine 48–cysteine 63, cysteine 55–cysteine 72, cysteine 62–cysteine 87, and cysteine 74–cysteine 85.

The protein belongs to the neurotoxin 19 (CSTX) family. 01 subfamily. In terms of tissue distribution, expressed by the venom gland.

Its subcellular location is the secreted. The sequence is that of U3-lycotoxin-Ls1a from Lycosa singoriensis (Wolf spider).